The chain runs to 352 residues: Putative killer cell immunoglobulin-like receptor-like protein KIR3DX1 (352 aa).

Positions 1 to 16 (MAPKLITVLCLGFCLN) are cleaved as a signal peptide. 2 Ig-like C2-type domains span residues 17–112 (QKIC…NSLK) and 224–311 (PSLS…VTRC). 2 cysteine pairs are disulfide-bonded: C49/C94 and C244/C295. N78 carries an N-linked (GlcNAc...) asparagine glycan.

Expressed in NK-cells.

It is found in the secreted. The chain is Putative killer cell immunoglobulin-like receptor-like protein KIR3DX1 (KIR3DX1) from Homo sapiens (Human).